Consider the following 612-residue polypeptide: Threonine--tRNA ligase (612 aa).

The segment at 218 to 509 (DHRKLGVELG…LSEHFGGNFP (292 aa)) is catalytic. Residues Cys-310, His-361, and His-486 each contribute to the Zn(2+) site.

Belongs to the class-II aminoacyl-tRNA synthetase family. In terms of assembly, homodimer. Requires Zn(2+) as cofactor.

It is found in the cytoplasm. The enzyme catalyses tRNA(Thr) + L-threonine + ATP = L-threonyl-tRNA(Thr) + AMP + diphosphate + H(+). Its function is as follows. Catalyzes the attachment of threonine to tRNA(Thr) in a two-step reaction: L-threonine is first activated by ATP to form Thr-AMP and then transferred to the acceptor end of tRNA(Thr). Also edits incorrectly charged L-seryl-tRNA(Thr). In Helicobacter pylori (strain P12), this protein is Threonine--tRNA ligase.